Consider the following 345-residue polypeptide: Holliday junction branch migration complex subunit RuvB (345 aa).

Positions proline 4–tyrosine 182 are large ATPase domain (RuvB-L). Residues arginine 22, glycine 63, lysine 66, threonine 67, threonine 68, glutamate 129–tyrosine 131, arginine 172, tyrosine 182, and arginine 219 contribute to the ATP site. Threonine 67 provides a ligand contact to Mg(2+). Positions threonine 183–glutamate 253 are small ATPAse domain (RuvB-S). A head domain (RuvB-H) region spans residues alanine 256–glutamate 345. 3 residues coordinate DNA: arginine 292, arginine 311, and arginine 316.

Belongs to the RuvB family. Homohexamer. Forms an RuvA(8)-RuvB(12)-Holliday junction (HJ) complex. HJ DNA is sandwiched between 2 RuvA tetramers; dsDNA enters through RuvA and exits via RuvB. An RuvB hexamer assembles on each DNA strand where it exits the tetramer. Each RuvB hexamer is contacted by two RuvA subunits (via domain III) on 2 adjacent RuvB subunits; this complex drives branch migration. In the full resolvosome a probable DNA-RuvA(4)-RuvB(12)-RuvC(2) complex forms which resolves the HJ.

It localises to the cytoplasm. It catalyses the reaction ATP + H2O = ADP + phosphate + H(+). The RuvA-RuvB-RuvC complex processes Holliday junction (HJ) DNA during genetic recombination and DNA repair, while the RuvA-RuvB complex plays an important role in the rescue of blocked DNA replication forks via replication fork reversal (RFR). RuvA specifically binds to HJ cruciform DNA, conferring on it an open structure. The RuvB hexamer acts as an ATP-dependent pump, pulling dsDNA into and through the RuvAB complex. RuvB forms 2 homohexamers on either side of HJ DNA bound by 1 or 2 RuvA tetramers; 4 subunits per hexamer contact DNA at a time. Coordinated motions by a converter formed by DNA-disengaged RuvB subunits stimulates ATP hydrolysis and nucleotide exchange. Immobilization of the converter enables RuvB to convert the ATP-contained energy into a lever motion, pulling 2 nucleotides of DNA out of the RuvA tetramer per ATP hydrolyzed, thus driving DNA branch migration. The RuvB motors rotate together with the DNA substrate, which together with the progressing nucleotide cycle form the mechanistic basis for DNA recombination by continuous HJ branch migration. Branch migration allows RuvC to scan DNA until it finds its consensus sequence, where it cleaves and resolves cruciform DNA. This chain is Holliday junction branch migration complex subunit RuvB, found in Chelativorans sp. (strain BNC1).